The following is a 93-amino-acid chain: MPRSLKKGPFVDQHLFVKVARENEKGTKNVIKTWSRRSMIIPDMLGHTIAVHDGRKHIPVFVTESMVGHKLGEFAPTRTFRGHVKDDRKGKRR.

It belongs to the universal ribosomal protein uS19 family.

Protein S19 forms a complex with S13 that binds strongly to the 16S ribosomal RNA. The protein is Small ribosomal subunit protein uS19 of Pseudarthrobacter chlorophenolicus (strain ATCC 700700 / DSM 12829 / CIP 107037 / JCM 12360 / KCTC 9906 / NCIMB 13794 / A6) (Arthrobacter chlorophenolicus).